The sequence spans 581 residues: 4-hydroxy-3-methylbut-2-en-1-yl diphosphate synthase (flavodoxin) (581 aa).

Positions 489, 492, 523, and 530 each coordinate [4Fe-4S] cluster.

It belongs to the IspG family. It depends on [4Fe-4S] cluster as a cofactor.

The enzyme catalyses (2E)-4-hydroxy-3-methylbut-2-enyl diphosphate + oxidized [flavodoxin] + H2O + 2 H(+) = 2-C-methyl-D-erythritol 2,4-cyclic diphosphate + reduced [flavodoxin]. The protein operates within isoprenoid biosynthesis; isopentenyl diphosphate biosynthesis via DXP pathway; isopentenyl diphosphate from 1-deoxy-D-xylulose 5-phosphate: step 5/6. Converts 2C-methyl-D-erythritol 2,4-cyclodiphosphate (ME-2,4cPP) into 1-hydroxy-2-methyl-2-(E)-butenyl 4-diphosphate. This Porphyromonas gingivalis (strain ATCC BAA-308 / W83) protein is 4-hydroxy-3-methylbut-2-en-1-yl diphosphate synthase (flavodoxin).